The primary structure comprises 235 residues: Large ribosomal subunit protein uL1 (235 aa).

This sequence belongs to the universal ribosomal protein uL1 family. In terms of assembly, part of the 50S ribosomal subunit.

Binds directly to 23S rRNA. The L1 stalk is quite mobile in the ribosome, and is involved in E site tRNA release. Functionally, protein L1 is also a translational repressor protein, it controls the translation of the L11 operon by binding to its mRNA. The sequence is that of Large ribosomal subunit protein uL1 from Methylobacterium sp. (strain 4-46).